A 309-amino-acid polypeptide reads, in one-letter code: Homoserine O-succinyltransferase (309 aa).

Cysteine 142 serves as the catalytic Acyl-thioester intermediate. The substrate site is built by lysine 163 and serine 192. The active-site Proton acceptor is histidine 235. The active site involves glutamate 237. Residue arginine 249 participates in substrate binding.

This sequence belongs to the MetA family. In terms of assembly, homodimer.

The protein localises to the cytoplasm. It catalyses the reaction L-homoserine + succinyl-CoA = O-succinyl-L-homoserine + CoA. It participates in amino-acid biosynthesis; L-methionine biosynthesis via de novo pathway; O-succinyl-L-homoserine from L-homoserine: step 1/1. Functionally, transfers a succinyl group from succinyl-CoA to L-homoserine, forming succinyl-L-homoserine. This Escherichia fergusonii (strain ATCC 35469 / DSM 13698 / CCUG 18766 / IAM 14443 / JCM 21226 / LMG 7866 / NBRC 102419 / NCTC 12128 / CDC 0568-73) protein is Homoserine O-succinyltransferase.